Reading from the N-terminus, the 734-residue chain is Photosystem I P700 chlorophyll a apoprotein A2 (734 aa).

8 consecutive transmembrane segments (helical) span residues 46–69 (IFAS…FHVA), 135–158 (LYTG…LHLQ), 175–199 (LNHH…HVAI), 273–291 (IAHH…GHMY), 330–353 (IHFQ…QHMY), 369–395 (AALY…IFFI), 417–439 (AIKS…LYVH), and 517–535 (FLVH…LILV). Positions 559 and 568 each coordinate [4Fe-4S] cluster. The next 2 membrane-spanning stretches (helical) occupy residues 575–596 (AFYL…YWHW) and 643–665 (LSVW…MFLI). Residues His-654, Met-662, and Tyr-670 each contribute to the chlorophyll a site. Phylloquinone is bound at residue Trp-671. The helical transmembrane segment at 707 to 727 (LVGLAHFSVGYIFTYAAFLIA) threads the bilayer.

This sequence belongs to the PsaA/PsaB family. The PsaA/B heterodimer binds the P700 chlorophyll special pair and subsequent electron acceptors. PSI consists of a core antenna complex that captures photons, and an electron transfer chain that converts photonic excitation into a charge separation. The eukaryotic PSI reaction center is composed of at least 11 subunits. The cofactor is P700 is a chlorophyll a/chlorophyll a' dimer, A0 is one or more chlorophyll a, A1 is one or both phylloquinones and FX is a shared 4Fe-4S iron-sulfur center..

Its subcellular location is the plastid. It localises to the chloroplast thylakoid membrane. The enzyme catalyses reduced [plastocyanin] + hnu + oxidized [2Fe-2S]-[ferredoxin] = oxidized [plastocyanin] + reduced [2Fe-2S]-[ferredoxin]. In terms of biological role, psaA and PsaB bind P700, the primary electron donor of photosystem I (PSI), as well as the electron acceptors A0, A1 and FX. PSI is a plastocyanin-ferredoxin oxidoreductase, converting photonic excitation into a charge separation, which transfers an electron from the donor P700 chlorophyll pair to the spectroscopically characterized acceptors A0, A1, FX, FA and FB in turn. Oxidized P700 is reduced on the lumenal side of the thylakoid membrane by plastocyanin. The polypeptide is Photosystem I P700 chlorophyll a apoprotein A2 (Illicium oligandrum (Star anise)).